Reading from the N-terminus, the 290-residue chain is Small ribosomal subunit protein bS6 (290 aa).

Residues 208–233 are disordered; it reads VEEAKTTAKKPAAPKMSAAERAKVDG.

The protein belongs to the bacterial ribosomal protein bS6 family.

Binds together with bS18 to 16S ribosomal RNA. The polypeptide is Small ribosomal subunit protein bS6 (Mesoplasma florum (strain ATCC 33453 / NBRC 100688 / NCTC 11704 / L1) (Acholeplasma florum)).